Consider the following 796-residue polypeptide: Lon protease (796 aa).

The region spanning 19 to 213 (LPVVVTRGIF…LLKELIINRP (195 aa)) is the Lon N-terminal domain. 376–383 (GPPGVGKT) serves as a coordination point for ATP. Residues 612–793 (ESQVGVVTGL…EDVYEIIFKN (182 aa)) form the Lon proteolytic domain. Catalysis depends on residues serine 699 and lysine 742.

Belongs to the peptidase S16 family. Homohexamer. Organized in a ring with a central cavity.

It is found in the cytoplasm. The enzyme catalyses Hydrolysis of proteins in presence of ATP.. ATP-dependent serine protease that mediates the selective degradation of mutant and abnormal proteins as well as certain short-lived regulatory proteins. Required for cellular homeostasis and for survival from DNA damage and developmental changes induced by stress. Degrades polypeptides processively to yield small peptide fragments that are 5 to 10 amino acids long. Binds to DNA in a double-stranded, site-specific manner. This is Lon protease from Mycoplasma mycoides subsp. mycoides SC (strain CCUG 32753 / NCTC 10114 / PG1).